The sequence spans 617 residues: MNAPDKFAQLLALTREPFPASTKNYLIGSRPDVRVPVRDIALTNGEQVSVYDTSGPYTDPAAEIDVRRGLPSVRGAWIEGRGDTERYEGRQRVALDDGSKSEDAARLAQLRAEAAALQRAPLRAKSGASHTGNVTQMHYAKKGIVTPEMEYVALRENGRREWMAQYQQDAAREQRLAGNPMGASIPKIITPEFVRDEVARGRAIIPANINHPEVEPMAIGRTFKVKINANIGNSAVTSSIEEEVEKLVWAIRWGADNVMDLSTGKNIHTTRDWIVRNSPVPIGTVPIYQALEKVGGIAEDLTWEIFRDTLVEQAEQGVDYFTIHAGVRLAFIHLTAQRRTGIVSRGGSIMAKWCMAHHRESFLYEHFEDICDIMKQYDVSFSLGDGLRPGCASDANDEAQFAELRTLGELTRTAWKHDVQTMIEGPGHVPMHMIQANMTEQLRTCHEAPFYTLGPLTIDIAPGYDHIASAIGAAMIGWMGTAMLCYVTPKEHLGLPDRDDVKQGIIAYKIAAHAADVAKGHPGARARDDALSQARFDFRWQDQFNLGLDPETAQQYHDETLPKDSAKVAHFCSMCGPKFCSMKITQEVREFAAQGMQEKAREFRGTGGELYVPIQPA.

Substrate is bound by residues Asn-230, Met-259, Tyr-288, His-324, 344 to 346 (SRG), 385 to 388 (DGLR), and Glu-424. His-428 contacts Zn(2+). Residue Tyr-451 participates in substrate binding. Zn(2+) is bound at residue His-492. The [4Fe-4S] cluster site is built by Cys-572, Cys-575, and Cys-580.

Belongs to the ThiC family. As to quaternary structure, homodimer. [4Fe-4S] cluster is required as a cofactor.

It catalyses the reaction 5-amino-1-(5-phospho-beta-D-ribosyl)imidazole + S-adenosyl-L-methionine = 4-amino-2-methyl-5-(phosphooxymethyl)pyrimidine + CO + 5'-deoxyadenosine + formate + L-methionine + 3 H(+). Its pathway is cofactor biosynthesis; thiamine diphosphate biosynthesis. Functionally, catalyzes the synthesis of the hydroxymethylpyrimidine phosphate (HMP-P) moiety of thiamine from aminoimidazole ribotide (AIR) in a radical S-adenosyl-L-methionine (SAM)-dependent reaction. This is Phosphomethylpyrimidine synthase from Paracidovorax citrulli (strain AAC00-1) (Acidovorax citrulli).